A 270-amino-acid chain; its full sequence is Probable feruloyl esterase C (270 aa).

Residues 1-22 (MAILSRLLTTVTLGSLLTSAVA) form the signal peptide.

Belongs to the faeC family.

It localises to the secreted. The catalysed reaction is feruloyl-polysaccharide + H2O = ferulate + polysaccharide.. Involved in degradation of plant cell walls. Hydrolyzes the feruloyl-arabinose ester bond in arabinoxylans, and the feruloyl-galactose ester bond in pectin. Active against paranitrophenyl-acetate, methyl ferulate and wheat arabinoxylan. The polypeptide is Probable feruloyl esterase C (faeC) (Aspergillus terreus (strain NIH 2624 / FGSC A1156)).